A 476-amino-acid chain; its full sequence is PTS system N-acetylmuramic acid-specific EIIBC component (476 aa).

Residues 1–89 (MATIDNAMIH…KASLGDNMSS (89 aa)) form the PTS EIIB type-1 domain. The active-site Phosphocysteine intermediate; for EIIB activity is Cys-28. Residues 116–476 (AKFATIFTPL…FFATKDVDLS (361 aa)) enclose the PTS EIIC type-1 domain. 10 consecutive transmembrane segments (helical) span residues 118 to 138 (FATIFTPLIPGFIGAGLLLGL), 160 to 180 (LIAYMKVFSKGLFSFLSILIG), 186 to 206 (AFGGSGVNGAILASLFILGYN), 220 to 240 (FFGLTIDPRGNIIGVLIAAIV), 265 to 285 (TLLIMGCFTFLFIMPIGVYLF), 304 to 324 (VLAGLFLISVMLGIHQGFVPV), 337 to 357 (LFPVLAMAGAGQVGAALALYF), 371 to 391 (GAIIPGFLGIGEPLIYGVTLP), 396 to 416 (FITACIGGAAGGFTIGLIAYL), and 443 to 463 (VLPAIATYLLGTVVAYATGFI).

The protein localises to the cell inner membrane. The enzyme catalyses N-acetyl-beta-D-muramate(out) + N(pros)-phospho-L-histidyl-[protein] = N-acetyl-beta-D-muramate 6-phosphate(in) + L-histidyl-[protein]. Its function is as follows. The phosphoenolpyruvate-dependent sugar phosphotransferase system (sugar PTS), a major carbohydrate active transport system, catalyzes the phosphorylation of incoming sugar substrates concomitantly with their translocation across the cell membrane. This system is involved in N-acetylmuramic acid (MurNAc) transport, yielding cytoplasmic MurNAc-6-P. Is also able to take up anhydro-N-acetylmuramic acid (anhMurNAc), but cannot phosphorylate the carbon 6, probably because of the 1,6-anhydro ring. The polypeptide is PTS system N-acetylmuramic acid-specific EIIBC component (murP) (Pasteurella multocida (strain Pm70)).